Consider the following 286-residue polypeptide: Phosphatidylglycerol--prolipoprotein diacylglyceryl transferase (286 aa).

7 helical membrane-spanning segments follow: residues 29-49 (IHWY…VGTY), 66-86 (LVFY…VFFY), 101-121 (VWEG…AMML), 130-150 (FLDL…LGRI), 181-201 (PSQL…LFWF), 209-229 (AAVA…VEFV), and 250-270 (LSLP…RHPA). Arg149 contacts a 1,2-diacyl-sn-glycero-3-phospho-(1'-sn-glycerol).

The protein belongs to the Lgt family.

Its subcellular location is the cell inner membrane. It catalyses the reaction L-cysteinyl-[prolipoprotein] + a 1,2-diacyl-sn-glycero-3-phospho-(1'-sn-glycerol) = an S-1,2-diacyl-sn-glyceryl-L-cysteinyl-[prolipoprotein] + sn-glycerol 1-phosphate + H(+). It functions in the pathway protein modification; lipoprotein biosynthesis (diacylglyceryl transfer). Functionally, catalyzes the transfer of the diacylglyceryl group from phosphatidylglycerol to the sulfhydryl group of the N-terminal cysteine of a prolipoprotein, the first step in the formation of mature lipoproteins. In Teredinibacter turnerae (strain ATCC 39867 / T7901), this protein is Phosphatidylglycerol--prolipoprotein diacylglyceryl transferase.